Reading from the N-terminus, the 260-residue chain is Pyridoxine 5'-phosphate synthase (260 aa).

Asn-15 lines the 3-amino-2-oxopropyl phosphate pocket. 17–18 (DH) is a binding site for 1-deoxy-D-xylulose 5-phosphate. Position 26 (Arg-26) interacts with 3-amino-2-oxopropyl phosphate. Catalysis depends on His-51, which acts as the Proton acceptor. The 1-deoxy-D-xylulose 5-phosphate site is built by Arg-53 and His-58. Glu-78 (proton acceptor) is an active-site residue. Thr-108 contributes to the 1-deoxy-D-xylulose 5-phosphate binding site. Catalysis depends on His-199, which acts as the Proton donor. Residues Gly-200 and 221–222 (GH) contribute to the 3-amino-2-oxopropyl phosphate site.

Belongs to the PNP synthase family. In terms of assembly, homooctamer; tetramer of dimers.

It is found in the cytoplasm. The catalysed reaction is 3-amino-2-oxopropyl phosphate + 1-deoxy-D-xylulose 5-phosphate = pyridoxine 5'-phosphate + phosphate + 2 H2O + H(+). Its pathway is cofactor biosynthesis; pyridoxine 5'-phosphate biosynthesis; pyridoxine 5'-phosphate from D-erythrose 4-phosphate: step 5/5. Catalyzes the complicated ring closure reaction between the two acyclic compounds 1-deoxy-D-xylulose-5-phosphate (DXP) and 3-amino-2-oxopropyl phosphate (1-amino-acetone-3-phosphate or AAP) to form pyridoxine 5'-phosphate (PNP) and inorganic phosphate. The sequence is that of Pyridoxine 5'-phosphate synthase from Cupriavidus metallidurans (strain ATCC 43123 / DSM 2839 / NBRC 102507 / CH34) (Ralstonia metallidurans).